The following is a 153-amino-acid chain: D-aminoacyl-tRNA deacylase (153 aa).

The Gly-cisPro motif, important for rejection of L-amino acids motif lies at 137-138; the sequence is GP.

It belongs to the DTD family. Homodimer.

The protein resides in the cytoplasm. It catalyses the reaction glycyl-tRNA(Ala) + H2O = tRNA(Ala) + glycine + H(+). The catalysed reaction is a D-aminoacyl-tRNA + H2O = a tRNA + a D-alpha-amino acid + H(+). Functionally, an aminoacyl-tRNA editing enzyme that deacylates mischarged D-aminoacyl-tRNAs. Also deacylates mischarged glycyl-tRNA(Ala), protecting cells against glycine mischarging by AlaRS. Acts via tRNA-based rather than protein-based catalysis; rejects L-amino acids rather than detecting D-amino acids in the active site. By recycling D-aminoacyl-tRNA to D-amino acids and free tRNA molecules, this enzyme counteracts the toxicity associated with the formation of D-aminoacyl-tRNA entities in vivo and helps enforce protein L-homochirality. This is D-aminoacyl-tRNA deacylase from Methylococcus capsulatus (strain ATCC 33009 / NCIMB 11132 / Bath).